We begin with the raw amino-acid sequence, 200 residues long: 3-isopropylmalate dehydratase small subunit (200 aa).

This sequence belongs to the LeuD family. LeuD type 1 subfamily. In terms of assembly, heterodimer of LeuC and LeuD.

It carries out the reaction (2R,3S)-3-isopropylmalate = (2S)-2-isopropylmalate. It functions in the pathway amino-acid biosynthesis; L-leucine biosynthesis; L-leucine from 3-methyl-2-oxobutanoate: step 2/4. Its function is as follows. Catalyzes the isomerization between 2-isopropylmalate and 3-isopropylmalate, via the formation of 2-isopropylmaleate. This is 3-isopropylmalate dehydratase small subunit from Histophilus somni (strain 129Pt) (Haemophilus somnus).